The sequence spans 326 residues: Tetraacyldisaccharide 4'-kinase (326 aa).

Residue 58 to 65 (SVGGNGKT) coordinates ATP.

The protein belongs to the LpxK family.

It carries out the reaction a lipid A disaccharide + ATP = a lipid IVA + ADP + H(+). It functions in the pathway glycolipid biosynthesis; lipid IV(A) biosynthesis; lipid IV(A) from (3R)-3-hydroxytetradecanoyl-[acyl-carrier-protein] and UDP-N-acetyl-alpha-D-glucosamine: step 6/6. Transfers the gamma-phosphate of ATP to the 4'-position of a tetraacyldisaccharide 1-phosphate intermediate (termed DS-1-P) to form tetraacyldisaccharide 1,4'-bis-phosphate (lipid IVA). This is Tetraacyldisaccharide 4'-kinase from Pseudoalteromonas translucida (strain TAC 125).